The following is a 282-amino-acid chain: Elongation factor Ts (282 aa).

Residues 79–82 (TDFV) are involved in Mg(2+) ion dislocation from EF-Tu.

It belongs to the EF-Ts family.

The protein resides in the cytoplasm. In terms of biological role, associates with the EF-Tu.GDP complex and induces the exchange of GDP to GTP. It remains bound to the aminoacyl-tRNA.EF-Tu.GTP complex up to the GTP hydrolysis stage on the ribosome. This Shewanella sediminis (strain HAW-EB3) protein is Elongation factor Ts.